The primary structure comprises 770 residues: Cullin-1 (770 aa).

The region spanning 700-761 (DRKLQIQAAI…EKEYLMRVEG (62 aa)) is the Cullin neddylation domain. Lys714 participates in a covalent cross-link: Glycyl lysine isopeptide (Lys-Gly) (interchain with G-Cter in NEDD8).

This sequence belongs to the cullin family. In terms of assembly, part of a complex that includes culA, fbxA and regA. Formation of this complex is dependent on the MAP kinase erkB. Neddylated; which enhances the ubiquitination activity of SCF.

Its pathway is protein modification; protein ubiquitination. Its function is as follows. Probable core component of cullin-based SCF-like E3 ubiquitin-protein ligase complexes which mediate the ubiquitination and subsequent proteasomal degradation of target proteins. The E3 ubiquitin-protein ligase activity of the complex is dependent on the neddylation of the cullin subunit. Required at several stages during development. CulA and fbxA regulate multicellular development by targeting regA for degradation via a pathway that requires erkB function, leading to an increase in cAMP and PKA activity. The sequence is that of Cullin-1 (culA) from Dictyostelium discoideum (Social amoeba).